A 198-amino-acid chain; its full sequence is FMN-dependent NADH:quinone oxidoreductase (198 aa).

96-99 (MYNF) serves as a coordination point for FMN.

The protein belongs to the azoreductase type 1 family. In terms of assembly, homodimer. FMN serves as cofactor.

It catalyses the reaction 2 a quinone + NADH + H(+) = 2 a 1,4-benzosemiquinone + NAD(+). It carries out the reaction N,N-dimethyl-1,4-phenylenediamine + anthranilate + 2 NAD(+) = 2-(4-dimethylaminophenyl)diazenylbenzoate + 2 NADH + 2 H(+). In terms of biological role, quinone reductase that provides resistance to thiol-specific stress caused by electrophilic quinones. Also exhibits azoreductase activity. Catalyzes the reductive cleavage of the azo bond in aromatic azo compounds to the corresponding amines. The polypeptide is FMN-dependent NADH:quinone oxidoreductase (Burkholderia thailandensis (strain ATCC 700388 / DSM 13276 / CCUG 48851 / CIP 106301 / E264)).